The primary structure comprises 147 residues: 3-dehydroquinate dehydratase (147 aa).

Tyr22 (proton acceptor) is an active-site residue. Positions 73, 79, and 86 each coordinate substrate. His99 functions as the Proton donor in the catalytic mechanism. Residues 100 to 101 (LS) and Arg110 each bind substrate.

It belongs to the type-II 3-dehydroquinase family. Homododecamer.

It carries out the reaction 3-dehydroquinate = 3-dehydroshikimate + H2O. Its pathway is metabolic intermediate biosynthesis; chorismate biosynthesis; chorismate from D-erythrose 4-phosphate and phosphoenolpyruvate: step 3/7. In terms of biological role, catalyzes a trans-dehydration via an enolate intermediate. In Synechococcus sp. (strain WH7803), this protein is 3-dehydroquinate dehydratase.